Reading from the N-terminus, the 533-residue chain is Monogalactosyldiacylglycerol synthase 1, chloroplastic (533 aa).

2 residues coordinate a 1,2-diacyl-sn-glycero-3-phospho-(1'-sn-glycerol): His155 and Pro189. Position 155 (His155) interacts with UDP. The interval 192-215 is required for binding to diacyl glycerol; that stretch reads QLPRSYNFLVKHGTLWKMTYYGTS. UDP is bound by residues Arg324, Phe413, Ile414, 434 to 438, and Glu456; that span reads GTIAE.

Belongs to the glycosyltransferase 28 family. Homodimer. Expressed in roots, stems, leaves, flowers, siliques and seeds.

It localises to the plastid. The protein localises to the chloroplast inner membrane. It carries out the reaction a 1,2-diacyl-sn-glycerol + UDP-alpha-D-galactose = a 1,2-diacyl-3-O-(beta-D-galactosyl)-sn-glycerol + UDP + H(+). It catalyses the reaction 1,2-di-(9Z,12Z-octadecadienoyl)-sn-glycerol + UDP-alpha-D-galactose = 1,2-di-(9Z,12Z-octadecadienoyl)-3-beta-D-galactosyl-sn-glycerol + UDP + H(+). The catalysed reaction is 1-(9Z-octadecenoyl)-2-hexadecanoyl-sn-glycerol + UDP-alpha-D-galactose = 1-(9Z-octadecenoyl)-2-hexadecanoyl-3-beta-D-galactosyl-sn-glycerol + UDP + H(+). The enzyme catalyses 1,2-di-(9Z-octadecenoyl)-sn-glycerol + UDP-alpha-D-galactose = 1,2-di-(9Z-octadecenoyl)-3-beta-D-galactosyl-sn-glycerol + UDP + H(+). Activated by phosphatidate (PA) and phosphatidylglycerol (PG). Inhibited by galvestine-1. In terms of biological role, involved in the synthesis of the major structural component of photosynthetic membranes. Required for proper thylakoid membrane biogenesis. Does not discriminate between prokaryotic (18:1/16:0) or eukaryotic (18:2/18:2) 1,2-diacylglycerol species, but operates with some preference for the prokaryotic one. Is responsible for most galactolipid synthesis in chloroplasts. Required for the formation of thylakoid membranes and functional photosynthetic electron transport during cotyledons greening in young seedlings. May link galactolipid synthesis with the coordinated transcriptional regulation of chloroplasts and other organelles during cotyledon greening. This Arabidopsis thaliana (Mouse-ear cress) protein is Monogalactosyldiacylglycerol synthase 1, chloroplastic.